A 148-amino-acid chain; its full sequence is Protein NrdI (148 aa).

It belongs to the NrdI family.

Its function is as follows. Probably involved in ribonucleotide reductase function. The polypeptide is Protein NrdI (Corynebacterium glutamicum (strain R)).